Here is a 158-residue protein sequence, read N- to C-terminus: ATP synthase subunit b', chloroplastic (158 aa).

The helical transmembrane segment at glycine 21–phenylalanine 41 threads the bilayer.

It belongs to the ATPase B chain family. In terms of assembly, F-type ATPases have 2 components, F(1) - the catalytic core - and F(0) - the membrane proton channel. F(1) has five subunits: alpha(3), beta(3), gamma(1), delta(1), epsilon(1). F(0) has four main subunits: a(1), b(1), b'(1) and c(10-14). The alpha and beta chains form an alternating ring which encloses part of the gamma chain. F(1) is attached to F(0) by a central stalk formed by the gamma and epsilon chains, while a peripheral stalk is formed by the delta, b and b' chains.

The protein localises to the plastid. It localises to the chloroplast thylakoid membrane. Functionally, f(1)F(0) ATP synthase produces ATP from ADP in the presence of a proton or sodium gradient. F-type ATPases consist of two structural domains, F(1) containing the extramembraneous catalytic core and F(0) containing the membrane proton channel, linked together by a central stalk and a peripheral stalk. During catalysis, ATP synthesis in the catalytic domain of F(1) is coupled via a rotary mechanism of the central stalk subunits to proton translocation. In terms of biological role, component of the F(0) channel, it forms part of the peripheral stalk, linking F(1) to F(0). The b'-subunit is a diverged and duplicated form of b found in plants and photosynthetic bacteria. The sequence is that of ATP synthase subunit b', chloroplastic from Porphyra purpurea (Red seaweed).